The chain runs to 947 residues: Bromodomain testis-specific protein (947 aa).

Residues 27–133 (RLTNQLQYLQ…KLFMQKLSQM (107 aa)) form the Bromo 1 domain. Asparagine 109 contributes to the JQ1 binding site. Position 187 is a phosphoserine (serine 187). The interval 202 to 228 (QTAAQVTKGVKRKADTTTPATSAVKAS) is disordered. A Nuclear localization signal motif is present at residues 209 to 220 (KGVKRKADTTTP). Residues 217 to 228 (TTTPATSAVKAS) show a composition bias toward polar residues. The 110-residue stretch at 267–376 (VKVTEQLRHC…DVFETHFSKI (110 aa)) folds into the Bromo 2 domain. Disordered stretches follow at residues 395-420 (ETTG…DERV), 444-511 (PFRK…KPMN), 610-698 (NNQL…IPPE), and 882-924 (NKCS…RRRE). Residues 417–470 (DERVKRLAKLQEQLKAVHQQLQVLSQVPFRKLNKKKEKSKKEKKKEKVNNSNEN) adopt a coiled-coil conformation. Residues 447 to 462 (KLNKKKEKSKKEKKKE) are compositionally biased toward basic residues. Positions 470 to 481 (NPRKMCEQMRLK) are enriched in basic and acidic residues. Basic residues predominate over residues 482 to 494 (EKSKRNQPKKRKQ). Residues 500–582 (KSEDEDNAKP…ACLRKRPLKP (83 aa)) enclose the NET domain. Positions 591–621 (KEELHSQKKQELEKRLLDVNNQLNSRKRQTK) form a coiled coil. A compositionally biased stretch (low complexity) spans 637–662 (LSESSSSSSSSSESESSSSDLSSSDS). 2 stretches are compositionally biased toward basic and acidic residues: residues 674-692 (TEVK…KMKN) and 885-924 (SGEE…RRRE).

Belongs to the BET family. As to quaternary structure, interacts with mRNA splicing machinery proteins SRSF2, DDX5, HNRNPK and TARDBP. Interacts with the acetylated N-terminus of histone H1, H2, H3 and H4. Interacts with P-TEFb components CDK9 and CCNT1/cyclin-T1. Interacts with SMARCE1. Interacts with the acetylated N-terminus of histone H1.4, H2A, H2B, H3 and H4. Ubiquitinated in a SPOP-dependent manner, leading to proteasomal degradation. As to expression, testis-specific. A 3-fold higher expression is seen in adult testis than in embryo testis. Expression seems to be correlated with histone H4 hyperacetylation during the haploid phase of spermatogenesis (spermiogenesis). No expression, or very low expression is seen in patients' testes with abnormal spermatogenesis. Expressed in cancers such as non-small cell lung cancer and squamous cell carcinomas of the head and neck as well as of esophagus, but not in melanoma or in cancers of the colon, breast, kidney and bladder.

The protein resides in the nucleus. Its function is as follows. Testis-specific chromatin protein that specifically binds histone H4 acetylated at 'Lys-5' and 'Lys-8' (H4K5ac and H4K8ac, respectively) and plays a key role in spermatogenesis. Required in late pachytene spermatocytes: plays a role in meiotic and post-meiotic cells by binding to acetylated histones at the promoter of specific meiotic and post-meiotic genes, facilitating their activation at the appropriate time. In the post-meiotic phase of spermatogenesis, binds to hyperacetylated histones and participates in their general removal from DNA. Also recognizes and binds a subset of butyrylated histones: able to bind histone H4 butyrylated at 'Lys-8' (H4K8ac), while it is not able to bind H4 butyrylated at 'Lys-5' (H4K5ac). Also acts as a component of the splicing machinery in pachytene spermatocytes and round spermatids and participates in 3'-UTR truncation of specific mRNAs in post-meiotic spermatids. Required for chromocenter organization, a structure comprised of peri-centromeric heterochromatin. The sequence is that of Bromodomain testis-specific protein (BRDT) from Homo sapiens (Human).